The chain runs to 435 residues: MTTWTAPLAPQPVHATVTVPGSKSQTNRALVLAALAAAQGRGTPTLSGALRSRDTDLMIGALRTLGLRVDGTGPELTVSGHIAPGPHARVDCGLAGTVLRFVPPLAALADAVVEFDGDEQARARPIAPLLDALRGLGVRIEGTALPFRVHGSGALAGGTVAIDASASSQFVSGLLLCAASFTEGLTVQHTGAALPSAPHIAMTVAMLRQAGVDVDDSVPNRWQVRPGPVAARHWEVEPDLTNAVPFLAAAVVSGGTVRITGWPADSVQPADNILSVLGKLNAVVSQTDSSLEVRGSGSYDGFDVDLRAVGELTPSVAALAALATPGSVSRLSGIAHLRGHETDRLAALSAEINRLGGDCTETPDGLVITATPLRPGVWHAYADHRMAMAGAIVGLRVAGVRVDDIGATSKTLPDFPRLWARMLDASLPDGEEHGM.

3-phosphoshikimate-binding residues include K23, S24, and R28. A phosphoenolpyruvate-binding site is contributed by K23. Phosphoenolpyruvate-binding residues include G96 and R124. 3-phosphoshikimate-binding residues include S167, S168, Q169, S196, E311, and H340. Q169 provides a ligand contact to phosphoenolpyruvate. E311 functions as the Proton acceptor in the catalytic mechanism. Phosphoenolpyruvate is bound by residues R344, R385, and K410.

It belongs to the EPSP synthase family. Monomer.

Its subcellular location is the cytoplasm. It catalyses the reaction 3-phosphoshikimate + phosphoenolpyruvate = 5-O-(1-carboxyvinyl)-3-phosphoshikimate + phosphate. It functions in the pathway metabolic intermediate biosynthesis; chorismate biosynthesis; chorismate from D-erythrose 4-phosphate and phosphoenolpyruvate: step 6/7. Its function is as follows. Catalyzes the transfer of the enolpyruvyl moiety of phosphoenolpyruvate (PEP) to the 5-hydroxyl of shikimate-3-phosphate (S3P) to produce enolpyruvyl shikimate-3-phosphate and inorganic phosphate. This Mycolicibacterium paratuberculosis (strain ATCC BAA-968 / K-10) (Mycobacterium paratuberculosis) protein is 3-phosphoshikimate 1-carboxyvinyltransferase.